A 486-amino-acid polypeptide reads, in one-letter code: uncharacterized protein (486 aa).

9 LRR repeats span residues 18–39 (NLKKIIINRDNVININILKKLV), 43–59 (ELHIIYYDNNILNNIPE), 60–81 (NIKSLYISNLNIINLNFITKLK), 82–103 (NITYLDISYNKNSNISNIILPH), 104–125 (SIEFLNCESCNINDYNFINNLV), 126–147 (NLKKLIISKNKFGNFNNVFPIS), 148–168 (IVELNMESIQIKDYKFIEKLI), 169–190 (NLKKLDISFNVKKNNIHLIKFP), and 198–219 (DYQSYKENYNYLKNLSNIIEYE).

This is an uncharacterized protein from Amsacta moorei entomopoxvirus (AmEPV).